A 600-amino-acid polypeptide reads, in one-letter code: Oligopeptide-binding protein OppA (600 aa).

The signal sequence occupies residues 1 to 22 (MNKLKVTLLASSVVLAATLLSA). The N-palmitoyl cysteine moiety is linked to residue C23. C23 is lipidated: S-diacylglycerol cysteine.

This sequence belongs to the bacterial solute-binding protein 5 family. In terms of assembly, the complex is composed of two ATP-binding proteins (OppD and OppF), two transmembrane proteins (OppB and OppC) and a solute-binding protein (OppA).

The protein localises to the cell membrane. Part of the ABC transporter complex OppABCDF involved in the uptake of oligopeptides. The chain is Oligopeptide-binding protein OppA from Lactococcus lactis subsp. cremoris (strain SK11).